We begin with the raw amino-acid sequence, 266 residues long: MFIMRREFPEEGDIVIGTVKDVKPYGAFVELLEYPGKEGMIHISEVTSGWVKNIRDHVKVGQRVVAKVLRVDERKGHIDLSLKRVTEQQKRAKVQEWKRFQRASKMLERAAEKLGKSLEEAWEEVGYLLEDEFGELYNAFETMVIEGKEVLDDLEISEEWKNVLYEVAKESIELTNVEVEGVIEMKSYAPDGIKQIKKALTTALKANPYEDVEVKITYIGAPKYRVVVIAPDYKSGEEVFKKVCEKAVATIKKLGGEGTYYRESKK.

The S1 motif domain occupies glycine 12–lysine 83.

This sequence belongs to the eIF-2-alpha family. Heterotrimer composed of an alpha, a beta and a gamma chain.

Functionally, eIF-2 functions in the early steps of protein synthesis by forming a ternary complex with GTP and initiator tRNA. This Methanocaldococcus jannaschii (strain ATCC 43067 / DSM 2661 / JAL-1 / JCM 10045 / NBRC 100440) (Methanococcus jannaschii) protein is Translation initiation factor 2 subunit alpha (eif2a).